An 85-amino-acid polypeptide reads, in one-letter code: uncharacterized protein (85 aa).

Belongs to the herpesviridae UL91 family.

This is an uncharacterized protein from Alcelaphine herpesvirus 1 (strain C500) (AlHV-1).